We begin with the raw amino-acid sequence, 485 residues long: Protein nucleotidyltransferase YdiU (485 aa).

Residues Gly-90, Gly-92, Arg-93, Lys-113, Asp-125, Gly-126, Arg-176, and Arg-183 each contribute to the ATP site. Residue Asp-252 is the Proton acceptor of the active site. Mg(2+) contacts are provided by Asn-253 and Asp-262. Asp-262 provides a ligand contact to ATP.

The protein belongs to the SELO family. Mg(2+) is required as a cofactor. The cofactor is Mn(2+).

The catalysed reaction is L-seryl-[protein] + ATP = 3-O-(5'-adenylyl)-L-seryl-[protein] + diphosphate. The enzyme catalyses L-threonyl-[protein] + ATP = 3-O-(5'-adenylyl)-L-threonyl-[protein] + diphosphate. It catalyses the reaction L-tyrosyl-[protein] + ATP = O-(5'-adenylyl)-L-tyrosyl-[protein] + diphosphate. It carries out the reaction L-histidyl-[protein] + UTP = N(tele)-(5'-uridylyl)-L-histidyl-[protein] + diphosphate. The catalysed reaction is L-seryl-[protein] + UTP = O-(5'-uridylyl)-L-seryl-[protein] + diphosphate. The enzyme catalyses L-tyrosyl-[protein] + UTP = O-(5'-uridylyl)-L-tyrosyl-[protein] + diphosphate. Functionally, nucleotidyltransferase involved in the post-translational modification of proteins. It can catalyze the addition of adenosine monophosphate (AMP) or uridine monophosphate (UMP) to a protein, resulting in modifications known as AMPylation and UMPylation. The chain is Protein nucleotidyltransferase YdiU from Vibrio atlanticus (strain LGP32) (Vibrio splendidus (strain Mel32)).